The chain runs to 179 residues: Large ribosomal subunit protein uL6 (179 aa).

This sequence belongs to the universal ribosomal protein uL6 family. In terms of assembly, part of the 50S ribosomal subunit.

Its function is as follows. This protein binds to the 23S rRNA, and is important in its secondary structure. It is located near the subunit interface in the base of the L7/L12 stalk, and near the tRNA binding site of the peptidyltransferase center. This is Large ribosomal subunit protein uL6 from Geobacter sulfurreducens (strain ATCC 51573 / DSM 12127 / PCA).